The sequence spans 196 residues: RACSCSPVHPQQAFCNADVVIRAKAVSEKEVDSGNDIYGNPIKRIQYEIKQIKMFKGPDKDIEFIYTAPSSAVCGVSLDVGGKKEYLIAGKAEGDGKMHITLCDFIVPWDTLSTTQKKSLNHRYQMGCECKITRCPMIPCYISSPDECLWMDWVTEKSINGHQAKFFACIKRSDGSCAWYRGAAPPKQEFLDIEDP.

The first 2 residues, 1 to 2 (RA), serve as a signal peptide directing secretion. Residue C3 coordinates Zn(2+). Involved in metalloproteinase-binding regions lie at residues 3–6 (CSCS) and 71–72 (SA). 6 disulfide bridges follow: C3/C74, C5/C103, C15/C128, C130/C177, C135/C140, and C148/C169. The NTR domain occupies 3 to 128 (CSCSPVHPQQ…SLNHRYQMGC (126 aa)).

This sequence belongs to the protease inhibitor I35 (TIMP) family. Interacts (via the C-terminal) with MMP2 (via the C-terminal PEX domain); the interaction inhibits the MMP2 activity. Post-translationally, the activity of TIMP2 is dependent on the presence of disulfide bonds.

It localises to the secreted. Its function is as follows. Complexes with metalloproteinases (such as collagenases) and irreversibly inactivates them by binding to their catalytic zinc cofactor. This is Metalloproteinase inhibitor 2 (TIMP2) from Cricetulus longicaudatus (Long-tailed dwarf hamster).